A 390-amino-acid polypeptide reads, in one-letter code: 4-O-beta-D-mannosyl-D-glucose phosphorylase (390 aa).

It belongs to the glycosyl hydrolase 130 family.

It carries out the reaction 4-O-beta-D-mannopyranosyl-D-glucopyranose + phosphate = alpha-D-mannose 1-phosphate + D-glucose. Converts 4-O-beta-D-mannopyranosyl-D-glucopyranose (Man-Glc) to mannose 1-phosphate (Man1P) and glucose. Involved in a mannan catabolic pathway which feeds into glycolysis. This chain is 4-O-beta-D-mannosyl-D-glucose phosphorylase, found in Bacteroides fragilis (strain ATCC 25285 / DSM 2151 / CCUG 4856 / JCM 11019 / LMG 10263 / NCTC 9343 / Onslow / VPI 2553 / EN-2).